Here is a 527-residue protein sequence, read N- to C-terminus: Acid-sensing ion channel 1 (527 aa).

The Cytoplasmic portion of the chain corresponds to 1-49; the sequence is MMDLKVDEEEVDSGQPVSIQAFASSSTLHGISHIFSYERLSLKRVVWAL. Residues 50–71 form a helical membrane-spanning segment; it reads CFMGSLALLALVCTNRIQYYFL. Residues 72–424 are Extracellular-facing; sequence YPHVTKLDEV…NYETIEQKKA (353 aa). Disulfide bonds link Cys94–Cys195, Cys173–Cys180, Cys291–Cys366, Cys309–Cys362, Cys313–Cys360, Cys322–Cys344, and Cys324–Cys336. N-linked (GlcNAc...) asparagine glycans are attached at residues Asn367 and Asn394. Residues 425–454 form a discontinuously helical membrane-spanning segment; sequence YEVAGLLGDIGGQMGLFIGASILTVLELFD. A GAS motif; ion selectivity filter motif is present at residues 443 to 445; sequence GAS. The Cytoplasmic portion of the chain corresponds to 455–527; the sequence is YAYEVIKHRL…ARGTFEDFTC (73 aa).

It belongs to the amiloride-sensitive sodium channel (TC 1.A.6) family. ASIC1 subfamily. As to quaternary structure, homotrimer. Heterotrimer; with other ASIC proteins producing channel with different properties.

It localises to the cell membrane. The protein localises to the postsynaptic cell membrane. Its subcellular location is the cell projection. The protein resides in the dendrite. The catalysed reaction is Na(+)(in) = Na(+)(out). The enzyme catalyses Li(+)(in) = Li(+)(out). It catalyses the reaction K(+)(in) = K(+)(out). It carries out the reaction Ca(2+)(in) = Ca(2+)(out). Inhibited by the diuretic drug amiloride. Inhibited by Cs(1+) ions. Inhibited by the spider venom psalmotoxin-1; this locks the channel into its desensitized conformation. Channel activity is increased by the heterodimeric snake venom neurotoxin composed of MitTx-alpha and MitTx-beta; this slows channel closure and increases the magnitude of the steady-state current that is triggered by low pH. Its function is as follows. Forms voltage-independent, pH-gated trimeric sodium channels that act as postsynaptic excitatory receptors in the nervous system, playing a crucial role in regulating synaptic plasticity, learning, and memory. Upon extracellular pH drop this channel elicits transient, fast activating, and completely desensitizing inward currents. Displays high selectivity for sodium ions but can also permit the permeation of other cations. Regulates more or less directly intracellular calcium concentration and CaMKII phosphorylation, and thereby the density of dendritic spines. Modulates neuronal activity in the circuits underlying innate fear. This chain is Acid-sensing ion channel 1, found in Gallus gallus (Chicken).